The sequence spans 187 residues: Cell division protein SepF (187 aa).

The disordered stretch occupies residues 21–97 (EVEVPDKQQQ…ATPNNASQES (77 aa)). 2 stretches are compositionally biased toward polar residues: residues 38–63 (EQSQ…YTTT) and 70–97 (RMSN…SQES).

The protein belongs to the SepF family. As to quaternary structure, homodimer. Interacts with FtsZ.

The protein resides in the cytoplasm. In terms of biological role, cell division protein that is part of the divisome complex and is recruited early to the Z-ring. Probably stimulates Z-ring formation, perhaps through the cross-linking of FtsZ protofilaments. Its function overlaps with FtsA. The polypeptide is Cell division protein SepF (Staphylococcus aureus (strain MRSA252)).